A 641-amino-acid polypeptide reads, in one-letter code: Soluble starch synthase 1, chloroplastic/amyloplastic (641 aa).

A chloroplast-targeting transit peptide spans 1–113; that stretch reads MATAAGMGIG…DSIDKTIFVA (113 aa). Positions 62–96 are disordered; the sequence is TFLVPTSTPPAPTQSPAPAPTPPPLPDSGVGEIEP. Over residues 68-87 the composition is skewed to pro residues; sequence STPPAPTQSPAPAPTPPPLP. Lysine 147 contributes to the ADP-alpha-D-glucose binding site.

The protein belongs to the glycosyltransferase 1 family. Bacterial/plant glycogen synthase subfamily. In terms of tissue distribution, leaves and immature seeds.

Its subcellular location is the plastid. It localises to the chloroplast. It is found in the amyloplast. The enzyme catalyses [(1-&gt;4)-alpha-D-glucosyl](n) + ADP-alpha-D-glucose = [(1-&gt;4)-alpha-D-glucosyl](n+1) + ADP + H(+). It participates in glycan biosynthesis; starch biosynthesis. Functionally, involved in starch synthesis in endosperm amyloplasts. Plays a role in the elongation of amylopectin chains. Synthesizes preferentially amylopectin chains with a degree of polymerization (DP) of 7 to 11 by elongating chains with a DP of 4 to 7. Generates distincly chains with a DP of 8 to 12 chains from short chains with a DP of 6 to 7. In Oryza sativa subsp. japonica (Rice), this protein is Soluble starch synthase 1, chloroplastic/amyloplastic.